Consider the following 730-residue polypeptide: Stonin-1 (730 aa).

3 disordered regions span residues M1–D26, N38–T83, and S132–Q159. 2 stretches are compositionally biased toward low complexity: residues P54 to P65 and S132 to H143. The SHD domain occupies G269–N402. The MHD domain occupies E407–E710.

The protein belongs to the Stoned B family.

The protein resides in the cytoplasm. The protein localises to the membrane. Its function is as follows. May be involved in the endocytic machinery. This is Stonin-1 (Ston1) from Mus musculus (Mouse).